A 131-amino-acid chain; its full sequence is C-type natriuretic peptide (131 aa).

The first 20 residues, 1 to 20 (MMCKALVFAVLLLAVPLERA), serve as a signal peptide directing secretion. Positions 21-109 (DSRALRTPVD…KRALPDRAKR (89 aa)) are excised as a propeptide. A disulfide bond links Cys115 and Cys131.

It belongs to the natriuretic peptide family. Highly expressed in brain and liver, and moderately in gut, gills and heart. Expressed to a low level in atrium, ventricle and liver of fresh water eels.

The protein localises to the secreted. In terms of biological role, hormone which plays a role in endochondral ossification through regulation of cartilaginous growth plate chondrocytes proliferation and differentiation. May also be vasoactive and natriuretic. May be important for freshwater adaptation. In Anguilla japonica (Japanese eel), this protein is C-type natriuretic peptide (cnp).